Here is an 85-residue protein sequence, read N- to C-terminus: UPF0181 protein YE1782 (85 aa).

Disordered regions lie at residues 1-22 and 57-85; these read MLAG…RIHQ and DTDF…PYEG. Over residues 9–21 the composition is skewed to basic and acidic residues; it reads SHEEQQEAVERIH. Residues 74 to 85 are compositionally biased toward acidic residues; that stretch reads QDADEIEDPYEG.

This sequence belongs to the UPF0181 family.

The protein is UPF0181 protein YE1782 of Yersinia enterocolitica serotype O:8 / biotype 1B (strain NCTC 13174 / 8081).